The chain runs to 123 residues: Small ribosomal subunit protein eS8 (123 aa).

The disordered stretch occupies residues 1–37 (MKDQGRSTRKRTGGRLKHASNKKRHQLGREPAETTVG). Over residues 7 to 26 (STRKRTGGRLKHASNKKRHQ) the composition is skewed to basic residues.

Belongs to the eukaryotic ribosomal protein eS8 family. As to quaternary structure, part of the 30S ribosomal subunit.

This is Small ribosomal subunit protein eS8 from Halorubrum lacusprofundi (strain ATCC 49239 / DSM 5036 / JCM 8891 / ACAM 34).